A 586-amino-acid chain; its full sequence is Retron Ec67 protein (586 aa).

One can recognise a Reverse transcriptase domain in the interval 29 to 262; the sequence is FLTNVLYRIG…SRQEVTGLTV (234 aa). Mg(2+) contacts are provided by Asp120, Asp201, and Asp202.

Belongs to the bacterial reverse transcriptase family.

It carries out the reaction DNA(n) + a 2'-deoxyribonucleoside 5'-triphosphate = DNA(n+1) + diphosphate. The catalysed reaction is Endonucleolytic cleavage to 5'-phosphomonoester.. Functionally, reverse transcriptase (RT) component of antiviral defense system retron Ec67, minimally composed of a non-coding RNA (ncRNA) and this RT. Expression of these 2 elements confers protection against bacteriophage T5. At multiplicity of infection (MOI) of 0.02 cultures grow normally when infected with T5 without collapsing, at MOI 2 cultures enter growth stasis. Responsible for synthesis of msDNA-Ec67 (a branched molecule with RNA linked by a 2',5'-phosphodiester bond to ssDNA). The retron transcript serves as primer (from a conserved internal G residue) and template for the reaction, and codes for the RT. Can use other retrons as substrate (msDNA-Mx162 and msDNA-Ec86). Also able to synthesize DNA from a DNA template at least in vitro, although the enzyme is less active with a DNA template. This Escherichia coli protein is Retron Ec67 protein.